The chain runs to 339 residues: Fe-S cluster assembly protein DRE2 (339 aa).

Positions 1–157 (MTRILLLLHP…KKLSSTHAAV (157 aa)) are N-terminal SAM-like domain. The tract at residues 158–206 (GLTDTSASNTDEENDDVNSKRKLQETKLAYFSESDDEDEEDQIIDENNL) is linker. Residues Cys-221, Cys-233, Cys-236, and Cys-238 each contribute to the [2Fe-2S] cluster site. The fe-S binding site A stretch occupies residues 221–238 (CELPNGKKRRKACKDCTC). [4Fe-4S] cluster is bound by residues Cys-302, Cys-305, Cys-313, and Cys-316. Short sequence motifs (cx2C motif) lie at residues 302–305 (CSSC) and 313–316 (CDGC). The tract at residues 302–316 (CSSCSLGDAFRCDGC) is fe-S binding site B.

Belongs to the anamorsin family. As to quaternary structure, monomer. Interacts with TAH18. Interacts with MIA40. Requires [2Fe-2S] cluster as cofactor. [4Fe-4S] cluster is required as a cofactor.

Its subcellular location is the cytoplasm. The protein resides in the mitochondrion intermembrane space. Its function is as follows. Component of the cytosolic iron-sulfur (Fe-S) protein assembly (CIA) machinery required for the maturation of extramitochondrial Fe-S proteins. Part of an electron transfer chain functioning in an early step of cytosolic Fe-S biogenesis, facilitating the de novo assembly of a [4Fe-4S] cluster on the scaffold complex CFD1-NBP35. Electrons are transferred to DRE2 from NADPH via the FAD- and FMN-containing protein TAH18. TAH18-DRE2 are also required for the assembly of the diferric tyrosyl radical cofactor of ribonucleotide reductase (RNR), probably by providing electrons for reduction during radical cofactor maturation in the catalytic small subunit RNR2. The sequence is that of Fe-S cluster assembly protein DRE2 from Debaryomyces hansenii (strain ATCC 36239 / CBS 767 / BCRC 21394 / JCM 1990 / NBRC 0083 / IGC 2968) (Yeast).